The sequence spans 427 residues: Cryptic catabolic NAD-specific glutamate dehydrogenase GudB (427 aa).

Substrate is bound by residues K80 and K107. Catalysis depends on K119, which acts as the Proton donor. 2 residues coordinate NAD(+): T203 and N234. Residue S361 participates in substrate binding.

This sequence belongs to the Glu/Leu/Phe/Val dehydrogenases family. As to quaternary structure, homohexamer.

The enzyme catalyses L-glutamate + NAD(+) + H2O = 2-oxoglutarate + NH4(+) + NADH + H(+). In terms of biological role, gudB seems to be intrinsically inactive, however spontaneous mutations removing a 9-bp direct repeat within the wild-type gudB sequence activated the GudB protein and allowed more-efficient utilization of amino acids of the glutamate family (called gutB1). This 3 amino acid insertion presumably causes severe destabilization of the fold of the protein, leading to an inactive enzyme that is very quickly degraded. The cryptic GudB serves as a buffer that may compensate for mutations in the rocG gene and that can also be decryptified for the utilization of glutamate as a single carbon source in the absence of arginine. It is unable to synthesize glutamate. The polypeptide is Cryptic catabolic NAD-specific glutamate dehydrogenase GudB (Bacillus subtilis (strain 168)).